Here is a 259-residue protein sequence, read N- to C-terminus: Proteasome subunit alpha (259 aa).

Belongs to the peptidase T1A family. The 20S proteasome core is composed of 14 alpha and 14 beta subunits that assemble into four stacked heptameric rings, resulting in a barrel-shaped structure. The two inner rings, each composed of seven catalytic beta subunits, are sandwiched by two outer rings, each composed of seven alpha subunits. The catalytic chamber with the active sites is on the inside of the barrel. Has a gated structure, the ends of the cylinder being occluded by the N-termini of the alpha-subunits. Is capped at one or both ends by the proteasome regulatory ATPase, PAN.

It localises to the cytoplasm. The formation of the proteasomal ATPase PAN-20S proteasome complex, via the docking of the C-termini of PAN into the intersubunit pockets in the alpha-rings, triggers opening of the gate for substrate entry. Interconversion between the open-gate and close-gate conformations leads to a dynamic regulation of the 20S proteasome proteolysis activity. In terms of biological role, component of the proteasome core, a large protease complex with broad specificity involved in protein degradation. This Methanococcus maripaludis (strain C5 / ATCC BAA-1333) protein is Proteasome subunit alpha.